A 799-amino-acid chain; its full sequence is Zinc finger protein 227 (799 aa).

The KRAB domain occupies 23-94 (VTFKDVAVVF…ETETQRSSKH (72 aa)). 19 consecutive C2H2-type zinc fingers follow at residues 250–272 (HPCG…PNVH), 269–291 (PNVH…QRIH), 324–346 (YRCD…YRTH), 352–374 (YKCE…QRVH), 380–402 (YKCE…QRVH), 408–430 (YKCE…QRVH), 436–458 (YKCD…RRVH), 464–486 (YKCE…FRVH), 492–514 (YKCK…QNVH), 520–542 (FKCE…QRVH), 548–570 (YRCD…QVIH), 576–598 (YKCE…QRVH), 604–626 (YKCE…QRVH), 632–654 (YKCG…QRVH), 660–682 (YKCD…QRGH), 688–710 (YKCE…QRVH), 716–738 (HICE…LGVH), 744–766 (FKCE…QRVH), and 772–794 (YKCD…QKVH).

The protein belongs to the krueppel C2H2-type zinc-finger protein family.

The protein resides in the nucleus. Functionally, may be involved in transcriptional regulation. In Homo sapiens (Human), this protein is Zinc finger protein 227 (ZNF227).